The sequence spans 142 residues: ATP synthase subunit b' (142 aa).

A helical transmembrane segment spans residues 7–27 (TLPLMMFQFFLLVAVLNAVFF).

It belongs to the ATPase B chain family. In terms of assembly, F-type ATPases have 2 components, F(1) - the catalytic core - and F(0) - the membrane proton channel. F(1) has five subunits: alpha(3), beta(3), gamma(1), delta(1), epsilon(1). F(0) has four main subunits: a(1), b(1), b'(1) and c(10-14). The alpha and beta chains form an alternating ring which encloses part of the gamma chain. F(1) is attached to F(0) by a central stalk formed by the gamma and epsilon chains, while a peripheral stalk is formed by the delta, b and b' chains.

The protein localises to the cellular thylakoid membrane. Its function is as follows. F(1)F(0) ATP synthase produces ATP from ADP in the presence of a proton or sodium gradient. F-type ATPases consist of two structural domains, F(1) containing the extramembraneous catalytic core and F(0) containing the membrane proton channel, linked together by a central stalk and a peripheral stalk. During catalysis, ATP synthesis in the catalytic domain of F(1) is coupled via a rotary mechanism of the central stalk subunits to proton translocation. Component of the F(0) channel, it forms part of the peripheral stalk, linking F(1) to F(0). The b'-subunit is a diverged and duplicated form of b found in plants and photosynthetic bacteria. This is ATP synthase subunit b' from Acaryochloris marina (strain MBIC 11017).